The chain runs to 475 residues: Ribulose bisphosphate carboxylase large chain (475 aa).

Residues 1 to 2 (MV) constitute a propeptide that is removed on maturation. At proline 3 the chain carries N-acetylproline. The residue at position 14 (lysine 14) is an N6,N6,N6-trimethyllysine. Residues asparagine 123 and threonine 173 each coordinate substrate. Lysine 175 functions as the Proton acceptor in the catalytic mechanism. Position 177 (lysine 177) interacts with substrate. Positions 201, 203, and 204 each coordinate Mg(2+). Lysine 201 is modified (N6-carboxylysine). Residue histidine 294 is the Proton acceptor of the active site. Substrate-binding residues include arginine 295, histidine 327, and serine 379.

Belongs to the RuBisCO large chain family. Type I subfamily. Heterohexadecamer of 8 large chains and 8 small chains. Mg(2+) serves as cofactor.

The protein localises to the plastid. It localises to the chloroplast. It carries out the reaction 2 (2R)-3-phosphoglycerate + 2 H(+) = D-ribulose 1,5-bisphosphate + CO2 + H2O. It catalyses the reaction D-ribulose 1,5-bisphosphate + O2 = 2-phosphoglycolate + (2R)-3-phosphoglycerate + 2 H(+). RuBisCO catalyzes two reactions: the carboxylation of D-ribulose 1,5-bisphosphate, the primary event in carbon dioxide fixation, as well as the oxidative fragmentation of the pentose substrate in the photorespiration process. Both reactions occur simultaneously and in competition at the same active site. This is Ribulose bisphosphate carboxylase large chain from Stigeoclonium helveticum (Green alga).